The chain runs to 200 residues: Small ribosomal subunit protein uS4 (200 aa).

Positions Thr22 to Lys42 are disordered. Residues Ala92 to Lys152 enclose the S4 RNA-binding domain.

It belongs to the universal ribosomal protein uS4 family. As to quaternary structure, part of the 30S ribosomal subunit. Contacts protein S5. The interaction surface between S4 and S5 is involved in control of translational fidelity.

One of the primary rRNA binding proteins, it binds directly to 16S rRNA where it nucleates assembly of the body of the 30S subunit. Functionally, with S5 and S12 plays an important role in translational accuracy. The chain is Small ribosomal subunit protein uS4 from Bacillus cereus (strain B4264).